The following is a 274-amino-acid chain: Malonyl-[acyl-carrier protein] O-methyltransferase (274 aa).

This sequence belongs to the methyltransferase superfamily.

The catalysed reaction is malonyl-[ACP] + S-adenosyl-L-methionine = malonyl-[ACP] methyl ester + S-adenosyl-L-homocysteine. Its pathway is cofactor biosynthesis; biotin biosynthesis. Functionally, converts the free carboxyl group of a malonyl-thioester to its methyl ester by transfer of a methyl group from S-adenosyl-L-methionine (SAM). It allows to synthesize pimeloyl-ACP via the fatty acid synthetic pathway. The chain is Malonyl-[acyl-carrier protein] O-methyltransferase from Bacteroides helcogenes (strain ATCC 35417 / DSM 20613 / JCM 6297 / CCUG 15421 / P 36-108).